A 470-amino-acid chain; its full sequence is Uronate isomerase (470 aa).

This sequence belongs to the metallo-dependent hydrolases superfamily. Uronate isomerase family.

It catalyses the reaction D-glucuronate = D-fructuronate. It carries out the reaction aldehydo-D-galacturonate = keto-D-tagaturonate. It participates in carbohydrate metabolism; pentose and glucuronate interconversion. This is Uronate isomerase from Serratia proteamaculans (strain 568).